Consider the following 443-residue polypeptide: DILAAFRVTPQPGVPPEEAGAAVXAESSTGTWTTVWTDGLTSLDRYKGRCYHIEPVPGEADQYICYVAYPLDLFEEGSVTNMFTSIVGNVFGFKALRALRLEDLRIPXAYVKTFQGPPHGIQVERDKLNKYGRPLLGCTIKPKLGLSAKNYGRACYECLRGGLDFTKDDENVNSQPFMRWRDRFLFCAEAIYKSQAETGEIKGHYLNATAGTCEEMMKRAVFARELGVPIIMHDYLTGGFTANTSLAHYCRDNGLLLHIHRAMHAVIDRQKNHGIHFRVLAKALRMSGGDHIHSGTVVGKLEGEREITLGFVDLLRDDFIEKDRSRGIYFTXDWVSLPGVIPVASGGIHVWHMPALTEIFGDDSVLQFGGGTLGHPWGNXPGAVANRVALEACVQARNEGRDLAAEGNTIIREASKWSPELAAACEVWKEIKFEFKPVDTLDV.

Substrate is bound by residues N89 and T139. The active-site Proton acceptor is the K141. K143 provides a ligand contact to substrate. Mg(2+) is bound by residues K167, D169, and E170. K167 bears the N6-carboxylysine mark. The active-site Proton acceptor is the H260. R261, H293, and S345 together coordinate substrate.

This sequence belongs to the RuBisCO large chain family. Type I subfamily. As to quaternary structure, heterohexadecamer of 8 large chains and 8 small chains; disulfide-linked. The disulfide link is formed within the large subunit homodimers. It depends on Mg(2+) as a cofactor. In terms of processing, the disulfide bond which can form in the large chain dimeric partners within the hexadecamer appears to be associated with oxidative stress and protein turnover.

It localises to the plastid. It is found in the chloroplast. The enzyme catalyses 2 (2R)-3-phosphoglycerate + 2 H(+) = D-ribulose 1,5-bisphosphate + CO2 + H2O. The catalysed reaction is D-ribulose 1,5-bisphosphate + O2 = 2-phosphoglycolate + (2R)-3-phosphoglycerate + 2 H(+). RuBisCO catalyzes two reactions: the carboxylation of D-ribulose 1,5-bisphosphate, the primary event in carbon dioxide fixation, as well as the oxidative fragmentation of the pentose substrate in the photorespiration process. Both reactions occur simultaneously and in competition at the same active site. This chain is Ribulose bisphosphate carboxylase large chain, found in Antirrhinum majus (Garden snapdragon).